Reading from the N-terminus, the 245-residue chain is Ribonuclease 3 (245 aa).

Positions 24–146 (YTVFSQKLGY…IIGAIYLESG (123 aa)) constitute an RNase III domain. Residue glutamate 59 coordinates Mg(2+). Aspartate 63 is an active-site residue. 2 residues coordinate Mg(2+): asparagine 132 and glutamate 135. Residue glutamate 135 is part of the active site. A DRBM domain is found at 173–243 (DPKTLLQEYL…ARRAYKLAVV (71 aa)).

It belongs to the ribonuclease III family. Homodimer. Mg(2+) serves as cofactor.

The protein localises to the cytoplasm. It carries out the reaction Endonucleolytic cleavage to 5'-phosphomonoester.. Functionally, digests double-stranded RNA. Involved in the processing of primary rRNA transcript to yield the immediate precursors to the large and small rRNAs (23S and 16S). Processes some mRNAs, and tRNAs when they are encoded in the rRNA operon. Processes pre-crRNA and tracrRNA of type II CRISPR loci if present in the organism. In Nitrosomonas eutropha (strain DSM 101675 / C91 / Nm57), this protein is Ribonuclease 3.